The sequence spans 528 residues: Probable rhamnogalacturonate lyase A (528 aa).

A signal peptide spans methionine 1–alanine 20. Intrachain disulfides connect cysteine 50–cysteine 93 and cysteine 184–cysteine 193.

Belongs to the polysaccharide lyase 4 family.

Its subcellular location is the secreted. It catalyses the reaction Endotype eliminative cleavage of L-alpha-rhamnopyranosyl-(1-&gt;4)-alpha-D-galactopyranosyluronic acid bonds of rhamnogalacturonan I domains in ramified hairy regions of pectin leaving L-rhamnopyranose at the reducing end and 4-deoxy-4,5-unsaturated D-galactopyranosyluronic acid at the non-reducing end.. In terms of biological role, pectinolytic enzymes consist of four classes of enzymes: pectin lyase, polygalacturonase, pectin methylesterase and rhamnogalacturonase. Degrades the rhamnogalacturonan I (RG-I) backbone of pectin. This chain is Probable rhamnogalacturonate lyase A (rglA), found in Aspergillus flavus (strain ATCC 200026 / FGSC A1120 / IAM 13836 / NRRL 3357 / JCM 12722 / SRRC 167).